Consider the following 266-residue polypeptide: Large ribosomal subunit protein uL3 (266 aa).

The tract at residues 124–149 (NQKIGPKSHGGGGGSKPVRQTGSLGD) is disordered.

This sequence belongs to the universal ribosomal protein uL3 family. Part of the 50S ribosomal subunit. Forms a cluster with proteins L14 and L19.

In terms of biological role, one of the primary rRNA binding proteins, it binds directly near the 3'-end of the 23S rRNA, where it nucleates assembly of the 50S subunit. The protein is Large ribosomal subunit protein uL3 of Mycoplasmopsis pulmonis (strain UAB CTIP) (Mycoplasma pulmonis).